The chain runs to 282 residues: Undecaprenyl-diphosphatase (282 aa).

The next 7 helical transmembrane spans lie at 40 to 60, 85 to 105, 115 to 135, 153 to 173, 193 to 213, 230 to 250, and 258 to 278; these read GAAF…MYFW, ARMG…GLLF, SLYW…LAEW, IGWK…IPGS, AARF…IFQL, LAAA…FLLS, and TIFI…LSTG.

This sequence belongs to the UppP family.

It is found in the cell inner membrane. The catalysed reaction is di-trans,octa-cis-undecaprenyl diphosphate + H2O = di-trans,octa-cis-undecaprenyl phosphate + phosphate + H(+). In terms of biological role, catalyzes the dephosphorylation of undecaprenyl diphosphate (UPP). Confers resistance to bacitracin. The sequence is that of Undecaprenyl-diphosphatase from Chlorobium phaeovibrioides (strain DSM 265 / 1930) (Prosthecochloris vibrioformis (strain DSM 265)).